Reading from the N-terminus, the 340-residue chain is DNA-directed RNA polymerase subunit alpha (340 aa).

The interval 1–233 (MYRNWRDLIS…EQLSIFINFD (233 aa)) is alpha N-terminal domain (alpha-NTD). The tract at residues 251-340 (INENLYRSVD…RLRGERKDEE (90 aa)) is alpha C-terminal domain (alpha-CTD).

This sequence belongs to the RNA polymerase alpha chain family. In terms of assembly, homodimer. The RNAP catalytic core consists of 2 alpha, 1 beta, 1 beta' and 1 omega subunit. When a sigma factor is associated with the core the holoenzyme is formed, which can initiate transcription.

The catalysed reaction is RNA(n) + a ribonucleoside 5'-triphosphate = RNA(n+1) + diphosphate. Functionally, DNA-dependent RNA polymerase catalyzes the transcription of DNA into RNA using the four ribonucleoside triphosphates as substrates. The polypeptide is DNA-directed RNA polymerase subunit alpha (Geobacter sulfurreducens (strain ATCC 51573 / DSM 12127 / PCA)).